A 608-amino-acid chain; its full sequence is Pentatricopeptide repeat-containing protein 1, apicoplast (608 aa).

PPR repeat units lie at residues 165–199 (TTLA…NIKP), 200–230 (DLVS…MIES), 236–270 (NYEI…PFVE), 336–370 (QYSE…GKYM), 372–402 (SIFV…LKND), 410–445 (NVNI…LLTP), and 446–480 (NNLS…KLLN).

Belongs to the PPR family. P subfamily. As to quaternary structure, homodimer.

Its subcellular location is the plastid. It is found in the apicoplast. Functionally, binds to apicoplast RNA transcripts, preferentially to the motif UUAU, and protects RNA transcripts from degradation by ribonuclease. This chain is Pentatricopeptide repeat-containing protein 1, apicoplast, found in Plasmodium falciparum (isolate 3D7).